Consider the following 2099-residue polypeptide: Dedicator of cytokinesis protein 8 (2099 aa).

Phosphoserine is present on residues S20, S139, and S451. Residues 560-729 (RNLLYVYPQR…GVFNIEVQAV (170 aa)) form the C2 DOCK-type domain. 4 positions are modified to phosphoserine: S904, S936, S1145, and S1243. The DOCKER domain maps to 1632–2066 (KSYQASPDLR…LRPMIERKIP (435 aa)). A Phosphoserine modification is found at S2087.

It belongs to the DOCK family. In terms of assembly, interacts (via DOCKER domain) with GTPase CDC42; the interaction activates CDC42 by exchanging GDP for GTP. The unphosphorylated form interacts (via DOCKER domain) with LRCH1 (via LRR repeats); the interaction prevents the association between DOCK8 and CDC42. Interacts with CCDC88B. In response to chemokine CXCL12/SDF-1-alpha stimulation, phosphorylated by PRKCA/PKC-alpha which promotes DOCK8 dissociation from LRCH1. As to expression, expressed in peripheral blood mononuclear cells (PBMCs).

Its subcellular location is the cytoplasm. The protein resides in the cell membrane. It localises to the cell projection. It is found in the lamellipodium membrane. Its function is as follows. Guanine nucleotide exchange factor (GEF) which specifically activates small GTPase CDC42 by exchanging bound GDP for free GTP. During immune responses, required for interstitial dendritic cell (DC) migration by locally activating CDC42 at the leading edge membrane of DC. Required for CD4(+) T-cell migration in response to chemokine stimulation by promoting CDC42 activation at T cell leading edge membrane. Is involved in NK cell cytotoxicity by controlling polarization of microtubule-organizing center (MTOC), and possibly regulating CCDC88B-mediated lytic granule transport to MTOC during cell killing. The protein is Dedicator of cytokinesis protein 8 (DOCK8) of Homo sapiens (Human).